A 287-amino-acid chain; its full sequence is 4-hydroxybenzoate octaprenyltransferase (287 aa).

Transmembrane regions (helical) follow at residues 41 to 61, 92 to 112, 133 to 153, 160 to 180, 218 to 238, and 267 to 287; these read LPLL…GCAI, VALA…LNAL, FFAI…PMAF, VPML…AYDT, LGIY…WLGW, and NNWL…ATWF.

It belongs to the UbiA prenyltransferase family. Mg(2+) serves as cofactor.

It is found in the cell inner membrane. It catalyses the reaction all-trans-octaprenyl diphosphate + 4-hydroxybenzoate = 4-hydroxy-3-(all-trans-octaprenyl)benzoate + diphosphate. It functions in the pathway cofactor biosynthesis; ubiquinone biosynthesis. Catalyzes the prenylation of para-hydroxybenzoate (PHB) with an all-trans polyprenyl group. Mediates the second step in the final reaction sequence of ubiquinone-8 (UQ-8) biosynthesis, which is the condensation of the polyisoprenoid side chain with PHB, generating the first membrane-bound Q intermediate 3-octaprenyl-4-hydroxybenzoate. The chain is 4-hydroxybenzoate octaprenyltransferase from Paraburkholderia xenovorans (strain LB400).